The chain runs to 338 residues: Mycothiol acetyltransferase (338 aa).

N-acetyltransferase domains are found at residues 29-173 (PETY…HQLP) and 181-338 (ISLR…NKFQ). Aspartate 55 lines the 1D-myo-inositol 2-(L-cysteinylamino)-2-deoxy-alpha-D-glucopyranoside pocket. Residue 105–107 (LVV) participates in acetyl-CoA binding. Glutamate 208, lysine 248, and glutamate 261 together coordinate 1D-myo-inositol 2-(L-cysteinylamino)-2-deoxy-alpha-D-glucopyranoside. Acetyl-CoA-binding positions include 265–267 (VGI) and 272–278 (QGKGLGK). 1D-myo-inositol 2-(L-cysteinylamino)-2-deoxy-alpha-D-glucopyranoside is bound at residue tyrosine 299.

The protein belongs to the acetyltransferase family. MshD subfamily. As to quaternary structure, monomer.

It catalyses the reaction 1D-myo-inositol 2-(L-cysteinylamino)-2-deoxy-alpha-D-glucopyranoside + acetyl-CoA = mycothiol + CoA + H(+). Catalyzes the transfer of acetyl from acetyl-CoA to desacetylmycothiol (Cys-GlcN-Ins) to form mycothiol. The chain is Mycothiol acetyltransferase from Renibacterium salmoninarum (strain ATCC 33209 / DSM 20767 / JCM 11484 / NBRC 15589 / NCIMB 2235).